A 672-amino-acid polypeptide reads, in one-letter code: Acetoacetyl-CoA synthetase (672 aa).

It belongs to the ATP-dependent AMP-binding enzyme family. As to expression, abundant in male subcutaneous white adipose tissue after weaning. In white adipose tissue, it is preferentially detected in mature adipocytes but not in preadipocytes. The expression in primary preadipocytes increases during the adipocyte differentiation. In brain, it is expressed in the midbrain, pons/medulla, cerebral cortex, hippocampus and cerebellum. The expression in the cerebellum is restricted primarily to glial cells, while in the cerebral cortex, it is restricted to neuronal cells.

The protein localises to the cytoplasm. It is found in the cytosol. The enzyme catalyses acetoacetate + ATP + CoA = acetoacetyl-CoA + AMP + diphosphate. Its function is as follows. Converts acetoacetate to acetoacetyl-CoA in the cytosol. Ketone body-utilizing enzyme, responsible for the synthesis of cholesterol and fatty acids. In Rattus norvegicus (Rat), this protein is Acetoacetyl-CoA synthetase (Aacs).